A 119-amino-acid chain; its full sequence is MQTNTSNKKIRAVAKHIHMSPHKVRRVVSQIRGRSYEQALMILEFMPYRACNPILQLLSSAAANANHNFGLSKTNLFISEIQVNKGTFFKRFQPRAQGRGYPIHKPTCHITIVLNILPK.

The protein belongs to the universal ribosomal protein uL22 family. As to quaternary structure, part of the 50S ribosomal subunit.

Its subcellular location is the plastid. It is found in the chloroplast. In terms of biological role, this protein binds specifically to 23S rRNA. Functionally, the globular domain of the protein is located near the polypeptide exit tunnel on the outside of the subunit, while an extended beta-hairpin is found that lines the wall of the exit tunnel in the center of the 70S ribosome. This is Large ribosomal subunit protein uL22c (rpl22) from Marchantia polymorpha (Common liverwort).